A 169-amino-acid polypeptide reads, in one-letter code: UPF0725 protein At2g19200 (169 aa).

Belongs to the UPF0725 (EMB2204) family.

The sequence is that of UPF0725 protein At2g19200 from Arabidopsis thaliana (Mouse-ear cress).